A 450-amino-acid chain; its full sequence is Tubulin alpha-5 chain (450 aa).

GTP contacts are provided by Gln-11, Glu-71, Gly-144, Thr-145, Thr-179, Asn-206, and Asn-228. Glu-71 lines the Mg(2+) pocket. The active site involves Glu-254. Thr-349 bears the Phosphothreonine mark. Residues 429–450 (EKDYEEVGAEGGDDEEDEGEDY) are disordered. The segment covering 431–450 (DYEEVGAEGGDDEEDEGEDY) has biased composition (acidic residues).

Belongs to the tubulin family. In terms of assembly, dimer of alpha and beta chains. A typical microtubule is a hollow water-filled tube with an outer diameter of 25 nm and an inner diameter of 15 nM. Alpha-beta heterodimers associate head-to-tail to form protofilaments running lengthwise along the microtubule wall with the beta-tubulin subunit facing the microtubule plus end conferring a structural polarity. Microtubules usually have 13 protofilaments but different protofilament numbers can be found in some organisms and specialized cells. Requires Mg(2+) as cofactor. In terms of processing, undergoes a tyrosination/detyrosination cycle, the cyclic removal and re-addition of a C-terminal tyrosine residue by the enzymes tubulin tyrosine carboxypeptidase (TTCP) and tubulin tyrosine ligase (TTL), respectively.

The protein localises to the cytoplasm. Its subcellular location is the cytoskeleton. It catalyses the reaction GTP + H2O = GDP + phosphate + H(+). Functionally, tubulin is the major constituent of microtubules, a cylinder consisting of laterally associated linear protofilaments composed of alpha- and beta-tubulin heterodimers. Microtubules grow by the addition of GTP-tubulin dimers to the microtubule end, where a stabilizing cap forms. Below the cap, tubulin dimers are in GDP-bound state, owing to GTPase activity of alpha-tubulin. This is Tubulin alpha-5 chain (TUBA5) from Arabidopsis thaliana (Mouse-ear cress).